We begin with the raw amino-acid sequence, 763 residues long: G protein-regulated inducer of neurite outgrowth 3 (763 aa).

Disordered regions lie at residues 1–48 (MGTV…IGNV), 65–111 (QACV…APGL), and 192–268 (ENSQ…GATC). Residues 27–44 (ESQSVSPQPAQPDNNASG) are compositionally biased toward polar residues. The segment covering 93 to 104 (KTPDDFLLHGSK) has biased composition (basic and acidic residues). A compositionally biased stretch (polar residues) spans 237–250 (ENKQPSATALNTTA). 2 positions are modified to phosphoserine: S323 and S359. Disordered regions lie at residues 420 to 452 (TSSQ…PDFQ), 471 to 624 (NQGL…PRRG), and 711 to 737 (VKTQ…GRQH). Polar residues predominate over residues 437-450 (KEATSRQPEGTNPD). Composition is skewed to basic and acidic residues over residues 480–496 (REPE…KAES) and 518–539 (PTDK…KDHA). The span at 593–609 (SLSLPSDGTGDSSPGSG) shows a compositional bias: low complexity.

Its function is as follows. May be involved in neurite outgrowth. The chain is G protein-regulated inducer of neurite outgrowth 3 (Gprin3) from Mus musculus (Mouse).